The following is a 123-amino-acid chain: Probable cytochrome c 2.2 (123 aa).

The tract at residues 1 to 21 (MGKKKSDTASGGAIPEGDNEK) is disordered. Heme c-binding residues include cysteine 30, cysteine 33, histidine 34, and methionine 95.

The protein belongs to the cytochrome c family. Binds 1 heme c group covalently per subunit.

It localises to the mitochondrion intermembrane space. In terms of biological role, electron carrier protein. The oxidized form of the cytochrome c heme group can accept an electron from the heme group of the cytochrome c1 subunit of cytochrome reductase. Cytochrome c then transfers this electron to the cytochrome oxidase complex, the final protein carrier in the mitochondrial electron-transport chain. This chain is Probable cytochrome c 2.2 (cyc-2.2), found in Caenorhabditis elegans.